The primary structure comprises 1004 residues: ABC transporter G family member 25 (1004 aa).

A signal peptide spans M1 to C27. The chain crosses the membrane as a helical span at residues A271–Y291. The disordered stretch occupies residues S343–A373. The span at E352–G361 shows a compositional bias: basic and acidic residues. Over residues K362 to H372 the composition is skewed to basic residues. One can recognise an ABC transporter domain in the interval V419–E659. G451 to T458 contributes to the ATP binding site. Helical transmembrane passes span A776 to I796, F804 to A824, L886 to F906, E907 to T927, W943 to T963, and F978 to L998.

This sequence belongs to the ABC transporter superfamily. ABCG family. Eye pigment precursor importer (TC 3.A.1.204) subfamily.

The protein resides in the membrane. The chain is ABC transporter G family member 25 from Oryza sativa subsp. japonica (Rice).